We begin with the raw amino-acid sequence, 332 residues long: Fructose-1,6-bisphosphatase class 1 1 (332 aa).

Glu92, Asp115, Leu117, and Asp118 together coordinate Mg(2+). Residues 118 to 121, Asn211, Tyr244, 262 to 264, and Lys274 contribute to the substrate site; these read DGSS and YLY. Residue Glu280 coordinates Mg(2+).

Belongs to the FBPase class 1 family. Homotetramer. Mg(2+) is required as a cofactor.

It localises to the cytoplasm. The catalysed reaction is beta-D-fructose 1,6-bisphosphate + H2O = beta-D-fructose 6-phosphate + phosphate. The protein operates within carbohydrate biosynthesis; gluconeogenesis. This Christiangramia forsetii (strain DSM 17595 / CGMCC 1.15422 / KT0803) (Gramella forsetii) protein is Fructose-1,6-bisphosphatase class 1 1.